Here is a 98-residue protein sequence, read N- to C-terminus: NADH-ubiquinone oxidoreductase chain 4L (98 aa).

Helical transmembrane passes span 1–21 (MTMV…GLLM), 29–49 (SLLC…VTIL), and 61–81 (IILL…LVMV).

This sequence belongs to the complex I subunit 4L family. As to quaternary structure, core subunit of respiratory chain NADH dehydrogenase (Complex I) which is composed of 45 different subunits.

It is found in the mitochondrion inner membrane. The catalysed reaction is a ubiquinone + NADH + 5 H(+)(in) = a ubiquinol + NAD(+) + 4 H(+)(out). Its function is as follows. Core subunit of the mitochondrial membrane respiratory chain NADH dehydrogenase (Complex I) which catalyzes electron transfer from NADH through the respiratory chain, using ubiquinone as an electron acceptor. Part of the enzyme membrane arm which is embedded in the lipid bilayer and involved in proton translocation. The sequence is that of NADH-ubiquinone oxidoreductase chain 4L (MT-ND4L) from Neomonachus schauinslandi (Hawaiian monk seal).